Here is a 275-residue protein sequence, read N- to C-terminus: AA9 family lytic polysaccharide monooxygenase D (275 aa).

Positions 1-17 are cleaved as a signal peptide; sequence MKLSLLAIAAIAPFVSA. Cu(2+) contacts are provided by H18 and H101. C67 and C189 are disulfide-bonded. An O2-binding site is contributed by H176. Y186 provides a ligand contact to Cu(2+). N-linked (GlcNAc...) asparagine glycosylation occurs at N220.

This sequence belongs to the polysaccharide monooxygenase AA9 family. The cofactor is Cu(2+).

The protein resides in the secreted. The enzyme catalyses [(1-&gt;4)-beta-D-glucosyl]n+m + reduced acceptor + O2 = 4-dehydro-beta-D-glucosyl-[(1-&gt;4)-beta-D-glucosyl]n-1 + [(1-&gt;4)-beta-D-glucosyl]m + acceptor + H2O.. Its function is as follows. Lytic polysaccharide monooxygenase (LPMO) that depolymerizes crystalline and amorphous polysaccharides via the oxidation of scissile alpha- or beta-(1-4)-glycosidic bonds, yielding C1 or C4 oxidation products. Catalysis by LPMOs requires the reduction of the active-site copper from Cu(II) to Cu(I) by a reducing agent and H(2)O(2) or O(2) as a cosubstrate. This chain is AA9 family lytic polysaccharide monooxygenase D, found in Aspergillus tamarii.